The following is a 701-amino-acid chain: Elongation factor G (701 aa).

The tr-type G domain maps to 8–286 (DRVRNIGIIA…AVVLLLPSPL (279 aa)). GTP is bound by residues 17–24 (AHIDAGKT), 85–89 (DTPGH), and 139–142 (NKMD).

This sequence belongs to the TRAFAC class translation factor GTPase superfamily. Classic translation factor GTPase family. EF-G/EF-2 subfamily.

Its subcellular location is the cytoplasm. Functionally, catalyzes the GTP-dependent ribosomal translocation step during translation elongation. During this step, the ribosome changes from the pre-translocational (PRE) to the post-translocational (POST) state as the newly formed A-site-bound peptidyl-tRNA and P-site-bound deacylated tRNA move to the P and E sites, respectively. Catalyzes the coordinated movement of the two tRNA molecules, the mRNA and conformational changes in the ribosome. This Herpetosiphon aurantiacus (strain ATCC 23779 / DSM 785 / 114-95) protein is Elongation factor G.